Here is a 450-residue protein sequence, read N- to C-terminus: Vimentin beta (450 aa).

The tract at residues 1–81 (MSSRTSTSSY…FGLADAINTE (81 aa)) is head. Over residues 24-38 (STYSSRQYSSPGRTT) the composition is skewed to polar residues. The disordered stretch occupies residues 24–56 (STYSSRQYSSPGRTTSRVSYSSASSTSPSLYMS). The span at 39–56 (SRVSYSSASSTSPSLYMS) shows a compositional bias: low complexity. Positions 82–117 (FKANRTNEKAEMQHVNDRFASYIEEVRFLEQQNKIL) are coil 1A. The 309-residue stretch at 89–397 (EKAEMQHVND…NLLEGEEYRI (309 aa)) folds into the IF rod domain. The linker 1 stretch occupies residues 118 to 139 (TAELEQMRGKGSSRVGDLYEDE). A coil 1B region spans residues 140 to 231 (MRELRRQVDQ…KLHDEELAEL (92 aa)). A linker 12 region spans residues 232–254 (QMQIQERHVQIDMEVAKPDLTAA). A coil 2 region spans residues 255-393 (LRDVRQQYET…ATYRNLLEGE (139 aa)). Residues 394 to 450 (EYRITTPFPNLSSLSLRESMKEIRPAMDSLSKKVVIKTIETRDGHIINQSTQKDNLE) form a tail region.

It belongs to the intermediate filament family. As to quaternary structure, homomer. One of the most prominent phosphoproteins in various cells of mesenchymal origin. Phosphorylation is enhanced during cell division, at which time vimentin filaments are significantly reorganized. As to expression, expressed in low amounts in retina, optic nerve, brain, and spinal cord and in very high amounts in eye lens.

Its function is as follows. Vimentins are class-III intermediate filaments found in various non-epithelial cells, especially mesenchymal cells. Vimentin is attached to the nucleus, endoplasmic reticulum, and mitochondria, either laterally or terminally. The polypeptide is Vimentin beta (Carassius auratus (Goldfish)).